A 318-amino-acid polypeptide reads, in one-letter code: Ankyrin repeat and SOCS box protein 7 (318 aa).

ANK repeat units follow at residues 13–42 (QEEL…SPNG), 46–75 (NGWT…DPTV), 80–109 (GGFT…RSDI), 116–145 (DGWT…EVDP), 149–178 (KGTT…NIDI), 180–208 (NGFL…DTNL), and 213–242 (DGQT…DTNT). Residues 265 to 318 (LDFLQDVTRQPRTLQDLCRIKIRQCIGLQNLKLLDELPIAKVMKDYLKHKFDDI) enclose the SOCS box domain.

It belongs to the ankyrin SOCS box (ASB) family. In terms of assembly, interacts with CUL5. Interacts with RNF7. Interacts with PSRC1.

Its subcellular location is the nucleus. It localises to the cytoplasm. Its pathway is protein modification; protein ubiquitination. Functionally, probable substrate-recognition component of a SCF-like ECS (Elongin-Cullin-SOCS-box protein) E3 ubiquitin-protein ligase complex which mediates the ubiquitination and subsequent proteasomal degradation of target proteins. Plays a role in spindle dynamics and genome integrity by targeting the mitotic progression protein PSRC1 for proteasomal degradation in a cell cycle-dependent manner. Also participates in meiosis by mediating the proper attachment between kinetochores and microtubules. In Mus musculus (Mouse), this protein is Ankyrin repeat and SOCS box protein 7 (Asb7).